A 236-amino-acid chain; its full sequence is Purine nucleoside phosphorylase DeoD-type (236 aa).

Histidine 5 contributes to the a purine D-ribonucleoside binding site. Residues glycine 21, arginine 25, arginine 44, and 88–91 contribute to the phosphate site; that span reads RVGS. A purine D-ribonucleoside contacts are provided by residues 180 to 182 and 204 to 205; these read EME and SD. Aspartate 205 acts as the Proton donor in catalysis.

Belongs to the PNP/UDP phosphorylase family. In terms of assembly, homohexamer; trimer of homodimers.

The catalysed reaction is a purine D-ribonucleoside + phosphate = a purine nucleobase + alpha-D-ribose 1-phosphate. It catalyses the reaction a purine 2'-deoxy-D-ribonucleoside + phosphate = a purine nucleobase + 2-deoxy-alpha-D-ribose 1-phosphate. Functionally, catalyzes the reversible phosphorolytic breakdown of the N-glycosidic bond in the beta-(deoxy)ribonucleoside molecules, with the formation of the corresponding free purine bases and pentose-1-phosphate. This chain is Purine nucleoside phosphorylase DeoD-type, found in Psychromonas ingrahamii (strain DSM 17664 / CCUG 51855 / 37).